The chain runs to 101 residues: Putative pterin-4-alpha-carbinolamine dehydratase (101 aa).

The protein belongs to the pterin-4-alpha-carbinolamine dehydratase family.

It carries out the reaction (4aS,6R)-4a-hydroxy-L-erythro-5,6,7,8-tetrahydrobiopterin = (6R)-L-erythro-6,7-dihydrobiopterin + H2O. This Burkholderia mallei (strain ATCC 23344) protein is Putative pterin-4-alpha-carbinolamine dehydratase.